The following is a 37-amino-acid chain: Photosystem I reaction center subunit IX (37 aa).

Residues 4–24 (FLTTAPVVAAIWFTLTAGILI) traverse the membrane as a helical segment.

Belongs to the PsaJ family.

The protein resides in the cellular thylakoid membrane. In terms of biological role, may help in the organization of the PsaE and PsaF subunits. The polypeptide is Photosystem I reaction center subunit IX (Synechococcus sp. (strain WH7803)).